We begin with the raw amino-acid sequence, 299 residues long: Methionine aminopeptidase (299 aa).

Residue His64 participates in substrate binding. 3 residues coordinate a divalent metal cation: Asp84, Asp95, and His158. His166 is a binding site for substrate. Positions 191 and 284 each coordinate a divalent metal cation.

Belongs to the peptidase M24A family. Methionine aminopeptidase archaeal type 2 subfamily. In terms of assembly, monomer. Co(2+) is required as a cofactor. Zn(2+) serves as cofactor. Requires Mn(2+) as cofactor. It depends on Fe(2+) as a cofactor.

It catalyses the reaction Release of N-terminal amino acids, preferentially methionine, from peptides and arylamides.. Functionally, removes the N-terminal methionine from nascent proteins. The N-terminal methionine is often cleaved when the second residue in the primary sequence is small and uncharged (Met-Ala-, Cys, Gly, Pro, Ser, Thr, or Val). This Methanothermobacter thermautotrophicus (strain ATCC 29096 / DSM 1053 / JCM 10044 / NBRC 100330 / Delta H) (Methanobacterium thermoautotrophicum) protein is Methionine aminopeptidase.